The sequence spans 149 residues: Large ribosomal subunit protein bL17 (149 aa).

Belongs to the bacterial ribosomal protein bL17 family. As to quaternary structure, part of the 50S ribosomal subunit. Contacts protein L32.

This chain is Large ribosomal subunit protein bL17, found in Kosmotoga olearia (strain ATCC BAA-1733 / DSM 21960 / TBF 19.5.1).